We begin with the raw amino-acid sequence, 265 residues long: Deoxycytidine kinase 1 (265 aa).

Glycine 30–threonine 38 is a binding site for ATP. Residues glutamate 55, tyrosine 88, and glutamine 99 each contribute to the substrate site. Glutamate 129 serves as the catalytic Proton acceptor. Arginine 130 and aspartate 135 together coordinate substrate. Residue arginine 190–arginine 194 participates in ATP binding. Glutamate 199 provides a ligand contact to substrate. Residue glutamate 242–phenylalanine 244 participates in ATP binding.

Belongs to the DCK/DGK family. In terms of assembly, homodimer.

Its subcellular location is the nucleus. It catalyses the reaction 2'-deoxycytidine + a ribonucleoside 5'-triphosphate = dCMP + a ribonucleoside 5'-diphosphate + H(+). The catalysed reaction is 2'-deoxyguanosine + ATP = dGMP + ADP + H(+). The enzyme catalyses 2'-deoxyadenosine + ATP = dAMP + ADP + H(+). Its function is as follows. Phosphorylates the deoxyribonucleosides deoxyadenosine, deoxycytidine and deoxyguanosine with highest activity against deoxycytidine followed by deadenosine and deoxyguanosine. Shows only very minor activity against deoxyuridine and deoxythymidine. In Xenopus laevis (African clawed frog), this protein is Deoxycytidine kinase 1.